The sequence spans 720 residues: Engulfment and cell motility protein 2 (720 aa).

Tyrosine 48 is subject to Phosphotyrosine. Residues 310–484 enclose the ELMO domain; sequence QAQRDIIFEL…QVVREQITRA (175 aa). A Phosphoserine modification is found at serine 503. A PH domain is found at 553 to 674; it reads SSFRKIGNRR…LLGKDMSSEL (122 aa). An SH3-binding motif is present at residues 700–707; the sequence is PEAPPPVP. A Phosphotyrosine modification is found at tyrosine 717.

In terms of assembly, interacts directly with the SH3-domain of DOCK1 via its SH3-binding site. Probably forms a heterotrimeric complex with DOCK1 and RAC1. Interacts with ARHGEF16, DOCK4 and EPHA2; mediates activation of RAC1 by EPHA2. Interacts with ADGRB3. Interacts with AUTS2; the interaction is direct.

The protein resides in the cytoplasm. It is found in the cytosol. Its subcellular location is the membrane. In terms of biological role, involved in cytoskeletal rearrangements required for phagocytosis of apoptotic cells and cell motility. Acts in association with DOCK1 and CRK. Was initially proposed to be required in complex with DOCK1 to activate Rac Rho small GTPases. May enhance the guanine nucleotide exchange factor (GEF) activity of DOCK1. This Bos taurus (Bovine) protein is Engulfment and cell motility protein 2 (ELMO2).